The sequence spans 129 residues: uncharacterized protein (129 aa).

Residues 46 to 66 (FFHFFFSFLLHLISPAVTGGI) traverse the membrane as a helical segment.

It is found in the membrane. This is an uncharacterized protein from Saccharomyces cerevisiae (strain ATCC 204508 / S288c) (Baker's yeast).